Here is a 356-residue protein sequence, read N- to C-terminus: Chavicol O-methyltransferase (356 aa).

S-adenosyl-L-methionine-binding residues include Gly202, Asp225, Asp245, Met246, and Lys259. Catalysis depends on His263, which acts as the Proton acceptor.

This sequence belongs to the class I-like SAM-binding methyltransferase superfamily. Cation-independent O-methyltransferase family. COMT subfamily. As to quaternary structure, homodimer. As to expression, specifically expressed in the peltate glandular trichomes on the surface of the young basil leaves.

It carries out the reaction (E)-isoeugenol + S-adenosyl-L-methionine = (E)-isomethyleugenol + S-adenosyl-L-homocysteine + H(+). Its pathway is aromatic compound metabolism; phenylpropanoid biosynthesis. Its function is as follows. Phenylpropene O-methyltransferase that catalyzes the methylation of the para-4-hydroxyl of chavicol to methylchavicol. Can also convert eugenol to methyleugenol but with less affinity. In Ocimum basilicum (Sweet basil), this protein is Chavicol O-methyltransferase (CVOMT1).